A 122-amino-acid polypeptide reads, in one-letter code: MAGVWVFKDGIVRRVENPGSEESSSAGDGGGGGRRKVLVHVPSGEVVASYEVLERRLRELGWERYLTDPCLLQFHQRSTVHLISVPRDFSKFKLVHMYDIVVKTRNVFEVRDAAAPAVSPAT.

The disordered stretch occupies residues 16–36 (ENPGSEESSSAGDGGGGGRRK).

Belongs to the FPF1 family.

This Oryza sativa subsp. japonica (Rice) protein is Flowering-promoting factor 1-like protein 3.